We begin with the raw amino-acid sequence, 331 residues long: tRNA-cytidine(32) 2-sulfurtransferase (331 aa).

A disordered region spans residues 1–33 (MNAPHMNDTAADAATLDDAAAPAGRPALTRREQ). The span at 8–23 (DTAADAATLDDAAAPA) shows a compositional bias: low complexity. Positions 71–76 (SGGKDS) match the PP-loop motif motif. Residues Cys146, Cys149, and Cys237 each coordinate [4Fe-4S] cluster.

Belongs to the TtcA family. In terms of assembly, homodimer. Mg(2+) serves as cofactor. It depends on [4Fe-4S] cluster as a cofactor.

It is found in the cytoplasm. It catalyses the reaction cytidine(32) in tRNA + S-sulfanyl-L-cysteinyl-[cysteine desulfurase] + AH2 + ATP = 2-thiocytidine(32) in tRNA + L-cysteinyl-[cysteine desulfurase] + A + AMP + diphosphate + H(+). It functions in the pathway tRNA modification. Its function is as follows. Catalyzes the ATP-dependent 2-thiolation of cytidine in position 32 of tRNA, to form 2-thiocytidine (s(2)C32). The sulfur atoms are provided by the cysteine/cysteine desulfurase (IscS) system. In Burkholderia orbicola (strain MC0-3), this protein is tRNA-cytidine(32) 2-sulfurtransferase.